A 311-amino-acid chain; its full sequence is 2-dehydro-3-deoxygluconokinase (311 aa).

Residues 34–35, 106–108, and Arg-166 contribute to the substrate site; these read GS and YYR. Residues 164 to 166, 224 to 229, 253 to 256, and Ser-283 each bind ATP; these read NIR, KLGPKG, and GAGD. The substrate site is built by Gly-253 and Asp-256. Asp-256 serves as the catalytic Proton acceptor. Asp-292 contacts substrate.

It belongs to the carbohydrate kinase PfkB family. In terms of assembly, homotetramer. A divalent metal cation serves as cofactor.

It carries out the reaction 2-dehydro-3-deoxy-D-gluconate + ATP = 2-dehydro-3-deoxy-6-phospho-D-gluconate + ADP + H(+). Its pathway is carbohydrate acid metabolism; 2-dehydro-3-deoxy-D-gluconate degradation; D-glyceraldehyde 3-phosphate and pyruvate from 2-dehydro-3-deoxy-D-gluconate: step 1/2. Functionally, involved in the degradation of glucose via the semi-phosphorylative Entner-Doudoroff pathway. Catalyzes the phosphorylation of 2-keto-3-deoxygluconate (KDG) to produce 2-keto-3-deoxy-6-phosphogluconate (KDPG). Can also use GTP, but not ADP or AMP, as a phosphoryl donor and 2-keto-D-gluconate (KG) as a phosphoryl acceptor. In Sulfurisphaera tokodaii (strain DSM 16993 / JCM 10545 / NBRC 100140 / 7) (Sulfolobus tokodaii), this protein is 2-dehydro-3-deoxygluconokinase.